A 180-amino-acid polypeptide reads, in one-letter code: Alkyl hydroperoxide reductase AhpD (180 aa).

Catalysis depends on C131, which acts as the Proton donor. Cysteines 131 and 134 form a disulfide. C134 (cysteine sulfenic acid (-SOH) intermediate) is an active-site residue.

Belongs to the AhpD family.

It catalyses the reaction N(6)-[(R)-dihydrolipoyl]-L-lysyl-[lipoyl-carrier protein] + a hydroperoxide = N(6)-[(R)-lipoyl]-L-lysyl-[lipoyl-carrier protein] + an alcohol + H2O. In terms of biological role, antioxidant protein with alkyl hydroperoxidase activity. Required for the reduction of the AhpC active site cysteine residues and for the regeneration of the AhpC enzyme activity. The sequence is that of Alkyl hydroperoxide reductase AhpD from Beijerinckia indica subsp. indica (strain ATCC 9039 / DSM 1715 / NCIMB 8712).